The sequence spans 158 residues: Glycine-rich RNA-binding protein 2, mitochondrial (158 aa).

Residues 1–34 constitute a mitochondrion transit peptide; it reads MAFCNKLGGLLRQNISSNGNVPVTSMLGSLRLMS. The 79-residue stretch at 35–113 folds into the RRM domain; it reads TKLFIGGLSW…RHIRVNPAND (79 aa). Ser-43 bears the Phosphoserine mark. Residues 122–157 form a glycine-rich (GR) required for cell-to-cell movement region; the sequence is GGGGGYSGGGGGYGGGGGGYGGGGGGYGGGGDGGGG.

This sequence belongs to the GR-RBP family. As to quaternary structure, binds to small phloem-mobile single-stranded RNAs (ss-sRNA, e.g. small interfering RNA (siRNA) and microRNA (miRNA)) in the phloeme exudate, including viral-derived sRNA (vsiRNA). Interacts with ORRM2, RBG3/ORRM3 and RBG5/ORRM4.

It localises to the mitochondrion. The protein localises to the secreted. Its function is as follows. Promotes the cis-splicing and editing of several mitochondrial RNAs (including NAD5 transcripts). Plays a role in RNA transcription or processing during stress. Binds RNAs and DNAs sequence with a preference to single-stranded nucleic acids. Displays strong affinity to poly(U) sequence. Exerts cold and freezing tolerance, probably by exhibiting an RNA chaperone activity during the cold and freezing adaptation process. Mediates cell-to-cell trafficking of RNA interference (RNAi) signals (small RNAs (sRNA), e.g. small interfering RNA (siRNA) and microRNA (miRNA)) which regulate growth and development, as well as responses to environmental inputs, including pathogen attack; can compromise zucchini yellow mosaic virus (ZYMV) and tobacco rattle virus (TRV) infections at the early stage. The sequence is that of Glycine-rich RNA-binding protein 2, mitochondrial from Arabidopsis thaliana (Mouse-ear cress).